A 398-amino-acid polypeptide reads, in one-letter code: Acetate kinase (398 aa).

N9 is a Mg(2+) binding site. K16 provides a ligand contact to ATP. R93 is a binding site for substrate. D150 serves as the catalytic Proton donor/acceptor. ATP-binding positions include 209–213 (HLGAG), 284–286 (DMR), and 329–333 (GIGEH). E382 contacts Mg(2+).

This sequence belongs to the acetokinase family. As to quaternary structure, homodimer. Mg(2+) serves as cofactor. It depends on Mn(2+) as a cofactor.

The protein resides in the cytoplasm. The enzyme catalyses acetate + ATP = acetyl phosphate + ADP. Its pathway is metabolic intermediate biosynthesis; acetyl-CoA biosynthesis; acetyl-CoA from acetate: step 1/2. Its function is as follows. Catalyzes the formation of acetyl phosphate from acetate and ATP. Can also catalyze the reverse reaction. The sequence is that of Acetate kinase from Rhodopseudomonas palustris (strain ATCC BAA-98 / CGA009).